Here is a 135-residue protein sequence, read N- to C-terminus: Transcription antitermination protein NusB (135 aa).

It belongs to the NusB family.

Functionally, involved in transcription antitermination. Required for transcription of ribosomal RNA (rRNA) genes. Binds specifically to the boxA antiterminator sequence of the ribosomal RNA (rrn) operons. The polypeptide is Transcription antitermination protein NusB (Clostridium perfringens (strain SM101 / Type A)).